Reading from the N-terminus, the 62-residue chain is Large ribosomal subunit protein uL29 (62 aa).

The protein belongs to the universal ribosomal protein uL29 family.

In Oleidesulfovibrio alaskensis (strain ATCC BAA-1058 / DSM 17464 / G20) (Desulfovibrio alaskensis), this protein is Large ribosomal subunit protein uL29.